A 299-amino-acid chain; its full sequence is F-actin-capping protein subunit alpha-3 (299 aa).

Position 290 is a phosphoserine (Ser-290).

It belongs to the F-actin-capping protein alpha subunit family. Component of the F-actin capping complex, composed of a heterodimer of an alpha and a beta subunit. Component of the WASH complex, composed of F-actin-capping protein subunit alpha (CAPZA1, CAPZA2 or CAPZA3), F-actin-capping protein subunit beta (CAPZB), WASHC1, WASHC2, WASHC3, WASHC4 and WASHC5.

Functionally, F-actin-capping proteins bind in a Ca(2+)-independent manner to the fast growing ends of actin filaments (barbed end) thereby blocking the exchange of subunits at these ends. Unlike other capping proteins (such as gelsolin and severin), these proteins do not sever actin filaments. May play a role in the morphogenesis of spermatid. This Macaca fascicularis (Crab-eating macaque) protein is F-actin-capping protein subunit alpha-3 (CAPZA3).